Reading from the N-terminus, the 171-residue chain is Ribosome maturation factor RimP (171 aa).

Belongs to the RimP family.

It is found in the cytoplasm. Functionally, required for maturation of 30S ribosomal subunits. This chain is Ribosome maturation factor RimP, found in Anaeromyxobacter dehalogenans (strain 2CP-C).